The chain runs to 368 residues: 4-hydroxy-3-methylbut-2-en-1-yl diphosphate synthase (flavodoxin) (368 aa).

Positions 271, 274, 306, and 313 each coordinate [4Fe-4S] cluster.

Belongs to the IspG family. [4Fe-4S] cluster is required as a cofactor.

The catalysed reaction is (2E)-4-hydroxy-3-methylbut-2-enyl diphosphate + oxidized [flavodoxin] + H2O + 2 H(+) = 2-C-methyl-D-erythritol 2,4-cyclic diphosphate + reduced [flavodoxin]. The protein operates within isoprenoid biosynthesis; isopentenyl diphosphate biosynthesis via DXP pathway; isopentenyl diphosphate from 1-deoxy-D-xylulose 5-phosphate: step 5/6. Converts 2C-methyl-D-erythritol 2,4-cyclodiphosphate (ME-2,4cPP) into 1-hydroxy-2-methyl-2-(E)-butenyl 4-diphosphate. In Histophilus somni (strain 129Pt) (Haemophilus somnus), this protein is 4-hydroxy-3-methylbut-2-en-1-yl diphosphate synthase (flavodoxin).